We begin with the raw amino-acid sequence, 273 residues long: Ribosomal RNA small subunit methyltransferase A (273 aa).

S-adenosyl-L-methionine is bound by residues Asn18, Leu20, Gly45, Glu66, Asp91, and Asn113.

Belongs to the class I-like SAM-binding methyltransferase superfamily. rRNA adenine N(6)-methyltransferase family. RsmA subfamily.

The protein resides in the cytoplasm. The enzyme catalyses adenosine(1518)/adenosine(1519) in 16S rRNA + 4 S-adenosyl-L-methionine = N(6)-dimethyladenosine(1518)/N(6)-dimethyladenosine(1519) in 16S rRNA + 4 S-adenosyl-L-homocysteine + 4 H(+). Functionally, specifically dimethylates two adjacent adenosines (A1518 and A1519) in the loop of a conserved hairpin near the 3'-end of 16S rRNA in the 30S particle. May play a critical role in biogenesis of 30S subunits. The protein is Ribosomal RNA small subunit methyltransferase A of Escherichia coli (strain 55989 / EAEC).